We begin with the raw amino-acid sequence, 186 residues long: Putative CTD phosphatase-like protein 355R (186 aa).

The region spanning 2–182 (ENNKKKLILL…TELLKVQKTL (181 aa)) is the FCP1 homology domain.

It belongs to the IIV-6 355R family.

In terms of biological role, may function as a phosphatase. This chain is Putative CTD phosphatase-like protein 355R, found in Aedes vexans (Inland floodwater mosquito).